The primary structure comprises 269 residues: Thiazole synthase (269 aa).

Lys-95 serves as the catalytic Schiff-base intermediate with DXP. 1-deoxy-D-xylulose 5-phosphate contacts are provided by residues Gly-156, 182 to 183 (AG), and 204 to 205 (NT).

It belongs to the ThiG family. As to quaternary structure, homotetramer. Forms heterodimers with either ThiH or ThiS.

Its subcellular location is the cytoplasm. The enzyme catalyses [ThiS sulfur-carrier protein]-C-terminal-Gly-aminoethanethioate + 2-iminoacetate + 1-deoxy-D-xylulose 5-phosphate = [ThiS sulfur-carrier protein]-C-terminal Gly-Gly + 2-[(2R,5Z)-2-carboxy-4-methylthiazol-5(2H)-ylidene]ethyl phosphate + 2 H2O + H(+). It participates in cofactor biosynthesis; thiamine diphosphate biosynthesis. Catalyzes the rearrangement of 1-deoxy-D-xylulose 5-phosphate (DXP) to produce the thiazole phosphate moiety of thiamine. Sulfur is provided by the thiocarboxylate moiety of the carrier protein ThiS. In vitro, sulfur can be provided by H(2)S. This is Thiazole synthase from Shewanella frigidimarina (strain NCIMB 400).